The chain runs to 200 residues: MISPENVVPMVIESSARGERAFDIYSLLLKERIIFLGSQINDQVANLVIAQLLFLDREDPDKDISLYIHSPGGVISAGLAMYDTMQLIRPKVSTICVGVAASMATVLLCAGAKGKRYALPNATIHMHQAMGGAQGQASDIEIAAREIMRQQDILRNILVKHTGQPMEKIIHDSDRDYYLNAQQAVEYGLIDEILQKPENK.

S102 functions as the Nucleophile in the catalytic mechanism. H127 is a catalytic residue.

Belongs to the peptidase S14 family. In terms of assembly, fourteen ClpP subunits assemble into 2 heptameric rings which stack back to back to give a disk-like structure with a central cavity, resembling the structure of eukaryotic proteasomes.

The protein resides in the cytoplasm. The catalysed reaction is Hydrolysis of proteins to small peptides in the presence of ATP and magnesium. alpha-casein is the usual test substrate. In the absence of ATP, only oligopeptides shorter than five residues are hydrolyzed (such as succinyl-Leu-Tyr-|-NHMec, and Leu-Tyr-Leu-|-Tyr-Trp, in which cleavage of the -Tyr-|-Leu- and -Tyr-|-Trp bonds also occurs).. Cleaves peptides in various proteins in a process that requires ATP hydrolysis. Has a chymotrypsin-like activity. Plays a major role in the degradation of misfolded proteins. This chain is ATP-dependent Clp protease proteolytic subunit, found in Dehalococcoides mccartyi (strain ATCC BAA-2266 / KCTC 15142 / 195) (Dehalococcoides ethenogenes (strain 195)).